A 74-amino-acid polypeptide reads, in one-letter code: Mu-conotoxin-like T3.1 (74 aa).

Residues 1–19 (MSKLGVLLTICLLLFPLTA) form the signal peptide. Residues 20-74 (LPMDGDEPADRPAERMQDNISSEQHPLFEERHGCCKGPEGCSSRECRPQHCCGRR) constitute a propeptide that is removed on maturation. Intrachain disulfides connect cysteine 53–cysteine 65, cysteine 54–cysteine 70, and cysteine 60–cysteine 71. Proline 57 is subject to 4-hydroxyproline. Glutamate 58 and glutamate 64 each carry 4-carboxyglutamate. Position 67 is a 4-hydroxyproline (proline 67). Cysteine 71 is subject to Cysteine amide.

The protein belongs to the conotoxin M superfamily. As to expression, expressed by the venom duct.

The protein resides in the secreted. Mu-conotoxins block voltage-gated sodium channels (Nav). In vitro, this synthetic peptide displays a low blocking effect in mouse extensor digitorum longus muscles (IC(50)=616 nM). This Conus tulipa (Fish-hunting cone snail) protein is Mu-conotoxin-like T3.1.